A 399-amino-acid chain; its full sequence is Coenzyme A biosynthesis bifunctional protein CoaBC (399 aa).

The phosphopantothenoylcysteine decarboxylase stretch occupies residues 1 to 190 (MQSLAGKKIL…FAPKILVGKR (190 aa)). Catalysis depends on Cys-159, which acts as the Proton donor. Positions 191–399 (VLITAGPTRE…AVMHLIHEQM (209 aa)) are phosphopantothenate--cysteine ligase. CTP contacts are provided by residues Asp-279, Lys-289, 307 to 310 (PDIV), Phe-326, Lys-340, and Lys-344.

In the N-terminal section; belongs to the HFCD (homo-oligomeric flavin containing Cys decarboxylase) superfamily. It in the C-terminal section; belongs to the PPC synthetase family. Requires Mg(2+) as cofactor. It depends on FMN as a cofactor.

The catalysed reaction is N-[(R)-4-phosphopantothenoyl]-L-cysteine + H(+) = (R)-4'-phosphopantetheine + CO2. The enzyme catalyses (R)-4'-phosphopantothenate + L-cysteine + CTP = N-[(R)-4-phosphopantothenoyl]-L-cysteine + CMP + diphosphate + H(+). It participates in cofactor biosynthesis; coenzyme A biosynthesis; CoA from (R)-pantothenate: step 2/5. It functions in the pathway cofactor biosynthesis; coenzyme A biosynthesis; CoA from (R)-pantothenate: step 3/5. Its function is as follows. Catalyzes two sequential steps in the biosynthesis of coenzyme A. In the first step cysteine is conjugated to 4'-phosphopantothenate to form 4-phosphopantothenoylcysteine. In the second step the latter compound is decarboxylated to form 4'-phosphopantotheine. This Vibrio cholerae serotype O1 (strain ATCC 39315 / El Tor Inaba N16961) protein is Coenzyme A biosynthesis bifunctional protein CoaBC.